The chain runs to 357 residues: UPF0324 membrane protein BMEI1914 (357 aa).

The next 11 membrane-spanning stretches (helical) occupy residues 29-48, 58-77, 90-112, 117-136, 149-171, 181-203, 210-232, 242-261, 268-290, 300-322, and 334-356; these read NILP…MVLE, AWLE…RSLA, SAKL…SAVI, GLIF…SYGI, LVAC…VIGA, AFTA…LLGL, ILAG…VSLL, LVRV…ISGN, PGFF…LHSL, AIQY…GVDI, and LTAI…MLGV.

The protein belongs to the UPF0324 family.

It is found in the cell membrane. The sequence is that of UPF0324 membrane protein BMEI1914 from Brucella melitensis biotype 1 (strain ATCC 23456 / CCUG 17765 / NCTC 10094 / 16M).